The following is a 159-amino-acid chain: Eukaryotic translation initiation factor 5A-5 (159 aa).

Basic and acidic residues predominate over residues 1-12 (MSDEEHHFESKA). The tract at residues 1–23 (MSDEEHHFESKADAGASKTYPQQ) is disordered. The residue at position 52 (lysine 52) is a Hypusine.

The protein belongs to the eIF-5A family. Lys-52 undergoes hypusination, a unique post-translational modification that consists in the addition of a butylamino group from spermidine to lysine side chain, leading to the formation of the unusual amino acid hypusine. eIF-5As are the only known proteins to undergo this modification, which is essential for their function.

In terms of biological role, translation factor that promotes translation elongation and termination, particularly upon ribosome stalling at specific amino acid sequence contexts. Binds between the exit (E) and peptidyl (P) site of the ribosome and promotes rescue of stalled ribosome: specifically required for efficient translation of polyproline-containing peptides as well as other motifs that stall the ribosome. Acts as a ribosome quality control (RQC) cofactor by joining the RQC complex to facilitate peptidyl transfer during CAT tailing step. In Solanum tuberosum (Potato), this protein is Eukaryotic translation initiation factor 5A-5 (EIF5A5).